Consider the following 249-residue polypeptide: Triosephosphate isomerase (249 aa).

A substrate-binding site is contributed by 9–11; the sequence is NWK. The active-site Electrophile is His-95. Residue Glu-167 is the Proton acceptor of the active site. Substrate contacts are provided by residues Gly-173, Ser-213, and 234-235; that span reads GG.

It belongs to the triosephosphate isomerase family. Homodimer.

It localises to the cytoplasm. The enzyme catalyses D-glyceraldehyde 3-phosphate = dihydroxyacetone phosphate. The protein operates within carbohydrate biosynthesis; gluconeogenesis. It functions in the pathway carbohydrate degradation; glycolysis; D-glyceraldehyde 3-phosphate from glycerone phosphate: step 1/1. Involved in the gluconeogenesis. Catalyzes stereospecifically the conversion of dihydroxyacetone phosphate (DHAP) to D-glyceraldehyde-3-phosphate (G3P). This Dictyoglomus thermophilum (strain ATCC 35947 / DSM 3960 / H-6-12) protein is Triosephosphate isomerase.